We begin with the raw amino-acid sequence, 368 residues long: Phospho-N-acetylmuramoyl-pentapeptide-transferase (368 aa).

10 consecutive transmembrane segments (helical) span residues 34 to 54, 79 to 99, 102 to 122, 140 to 160, 176 to 196, 207 to 227, 247 to 267, 271 to 291, 296 to 316, and 345 to 365; these read GAVV…IDHL, TPTM…VLWA, LNPY…VGFY, ARIL…VRLG, LVIK…VGAG, GLAI…AYLA, LAVL…FNAP, IFMG…IAVA, IVLA…IVQV, and QIVI…LSTL.

Belongs to the glycosyltransferase 4 family. MraY subfamily. The cofactor is Mg(2+).

It localises to the cell inner membrane. It carries out the reaction UDP-N-acetyl-alpha-D-muramoyl-L-alanyl-gamma-D-glutamyl-meso-2,6-diaminopimeloyl-D-alanyl-D-alanine + di-trans,octa-cis-undecaprenyl phosphate = di-trans,octa-cis-undecaprenyl diphospho-N-acetyl-alpha-D-muramoyl-L-alanyl-D-glutamyl-meso-2,6-diaminopimeloyl-D-alanyl-D-alanine + UMP. The protein operates within cell wall biogenesis; peptidoglycan biosynthesis. Catalyzes the initial step of the lipid cycle reactions in the biosynthesis of the cell wall peptidoglycan: transfers peptidoglycan precursor phospho-MurNAc-pentapeptide from UDP-MurNAc-pentapeptide onto the lipid carrier undecaprenyl phosphate, yielding undecaprenyl-pyrophosphoryl-MurNAc-pentapeptide, known as lipid I. The protein is Phospho-N-acetylmuramoyl-pentapeptide-transferase of Bradyrhizobium sp. (strain BTAi1 / ATCC BAA-1182).